A 444-amino-acid chain; its full sequence is Tubulin beta 8B (444 aa).

Positions 1 to 4 (MREI) match the MREI motif motif. 6 residues coordinate GTP: glutamine 11, glutamate 69, serine 138, glycine 142, threonine 143, and glycine 144. Residue glutamate 69 participates in Mg(2+) binding. Position 172 is a phosphoserine; by CDK1 (serine 172). Residues asparagine 204 and asparagine 226 each contribute to the GTP site. Residues 421–444 (EYQQYQDATAEEEEDEEYAEEEVA) are disordered. Residues 429-444 (TAEEEEDEEYAEEEVA) are compositionally biased toward acidic residues. Glutamate 436 bears the 5-glutamyl polyglutamate mark.

The protein belongs to the tubulin family. In terms of assembly, dimer of alpha and beta chains. A typical microtubule is a hollow water-filled tube with an outer diameter of 25 nm and an inner diameter of 15 nM. Alpha-beta heterodimers associate head-to-tail to form protofilaments running lengthwise along the microtubule wall with the beta-tubulin subunit facing the microtubule plus end conferring a structural polarity. Microtubules usually have 13 protofilaments but different protofilament numbers can be found in some organisms and specialized cells. The cofactor is Mg(2+). Post-translationally, some glutamate residues at the C-terminus are polyglutamylated, resulting in polyglutamate chains on the gamma-carboxyl group. Polyglutamylation plays a key role in microtubule severing by spastin (SPAST). SPAST preferentially recognizes and acts on microtubules decorated with short polyglutamate tails: severing activity by SPAST increases as the number of glutamates per tubulin rises from one to eight, but decreases beyond this glutamylation threshold. Glutamylation is also involved in cilia motility. Some glutamate residues at the C-terminus are monoglycylated but not polyglycylated due to the absence of functional TTLL10 in human. Monoglycylation is mainly limited to tubulin incorporated into cilia and flagella axonemes, which is required for their stability and maintenance. Flagella glycylation controls sperm motility. Both polyglutamylation and monoglycylation can coexist on the same protein on adjacent residues, and lowering glycylation levels increases polyglutamylation, and reciprocally. In terms of processing, phosphorylated on Ser-172 by CDK1 during the cell cycle, from metaphase to telophase, but not in interphase. This phosphorylation inhibits tubulin incorporation into microtubules.

The protein localises to the cytoplasm. Its subcellular location is the cytoskeleton. Its function is as follows. Tubulin is the major constituent of microtubules, a cylinder consisting of laterally associated linear protofilaments composed of alpha- and beta-tubulin heterodimers. Microtubules grow by the addition of GTP-tubulin dimers to the microtubule end, where a stabilizing cap forms. Below the cap, tubulin dimers are in GDP-bound state, owing to GTPase activity of alpha-tubulin. This is Tubulin beta 8B from Homo sapiens (Human).